The primary structure comprises 146 residues: 3-hydroxyacyl-[acyl-carrier-protein] dehydratase FabZ (146 aa).

Residue H48 is part of the active site.

It belongs to the thioester dehydratase family. FabZ subfamily.

Its subcellular location is the cytoplasm. It carries out the reaction a (3R)-hydroxyacyl-[ACP] = a (2E)-enoyl-[ACP] + H2O. In terms of biological role, involved in unsaturated fatty acids biosynthesis. Catalyzes the dehydration of short chain beta-hydroxyacyl-ACPs and long chain saturated and unsaturated beta-hydroxyacyl-ACPs. This is 3-hydroxyacyl-[acyl-carrier-protein] dehydratase FabZ from Paracidovorax citrulli (strain AAC00-1) (Acidovorax citrulli).